Reading from the N-terminus, the 357-residue chain is Arginine kinase (357 aa).

Alanine 2 carries the N-acetylalanine modification. The Phosphagen kinase N-terminal domain occupies 9–91; sequence KLEEGFKKLE…FDPIIEDYHK (83 aa). Position 64–68 (64–68) interacts with L-arginine; that stretch reads GVGVY. The region spanning 119–356 is the Phosphagen kinase C-terminal domain; the sequence is FVISTRVRCG…LELIKIEKEM (238 aa). ATP is bound by residues 122-126 and histidine 185; that span reads STRVR. Glutamate 225 lines the L-arginine pocket. Arginine 229 is a binding site for ATP. An L-arginine-binding site is contributed by cysteine 271. Residues 280-284 and 309-314 contribute to the ATP site; these read RASVH and RGTRGE. Glutamate 314 is a binding site for L-arginine.

Belongs to the ATP:guanido phosphotransferase family.

The enzyme catalyses L-arginine + ATP = N(omega)-phospho-L-arginine + ADP + H(+). The polypeptide is Arginine kinase (Callinectes sapidus (Blue crab)).